We begin with the raw amino-acid sequence, 178 residues long: Large ribosomal subunit protein uL6 (178 aa).

The protein belongs to the universal ribosomal protein uL6 family. In terms of assembly, part of the 50S ribosomal subunit.

In terms of biological role, this protein binds to the 23S rRNA, and is important in its secondary structure. It is located near the subunit interface in the base of the L7/L12 stalk, and near the tRNA binding site of the peptidyltransferase center. This is Large ribosomal subunit protein uL6 from Streptococcus pneumoniae (strain ATCC 700669 / Spain 23F-1).